Consider the following 282-residue polypeptide: Protein-export membrane protein SecF (282 aa).

Transmembrane regions (helical) follow at residues methionine 16–valine 36, glutamine 126–phenylalanine 146, isoleucine 148–alanine 168, phenylalanine 169–isoleucine 189, glycine 221–leucine 241, and valine 253–leucine 273.

This sequence belongs to the SecD/SecF family. SecF subfamily. Part of the protein translocation apparatus. Forms a complex with SecD.

The protein localises to the cell membrane. In terms of biological role, involved in protein export. This is Protein-export membrane protein SecF from Methanolacinia petrolearia (strain DSM 11571 / OCM 486 / SEBR 4847) (Methanoplanus petrolearius).